The chain runs to 64 residues: Long neurotoxin MS4 (64 aa).

5 disulfides stabilise this stretch: cysteine 3-cysteine 24, cysteine 6-cysteine 11, cysteine 17-cysteine 41, cysteine 45-cysteine 57, and cysteine 58-cysteine 63.

It belongs to the three-finger toxin family. Ancestral subfamily. In terms of tissue distribution, expressed by the venom gland.

The protein resides in the secreted. Its function is as follows. Produces peripheral paralysis by blocking neuromuscular transmission at the postsynaptic site. Weak inhibitor of the endogenous nicotinic acetylcholine receptors (nAChR) in the human rhabdomyosarcoma TE 671 cell line with an IC(50) of 690 mM. This neurotoxin is lethal to zebrafish by injection at the back of the dorsolateral region, but is not toxic to mice by intraperitoneal injection. In Micrurus surinamensis (Surinam coral snake), this protein is Long neurotoxin MS4.